The following is a 425-amino-acid chain: MKVLVVGNGGREHALAWKLLQSPQIEQVACVPGNGGTATLARCQNVSLAVDDFEGISQYALNQGFSLVVVGPEVPLAKGITDYLQEKGLMVFGPSRAGAQIEASKAWAKALMQEAGIPTAKAAVFTEAAAAKSYIQAQGAPIVVKADGLAAGKGVTVATTIEQAQSAIDAIFQGQFGSAGEFVVIEECLTGQEVSVLALTDGLTIRPLLPAQDHKRIGEGDTGENTGGMGAYAPAPIATPELMALVQTEVLERAIATLQSKGIDYRGVLYAGLMITPNGDFKVLEFNCRFGDPETQVILPLLATPLEELILACVQQRLGELPPIAWQGGASATVVAASGGYPGDYEKGQVITGIPQAEATGATVFHAGTKLNAQQQIVTDGGRVLNVTGIGENFQQALAQAYTGIKAIDFSGIYYRRDIGYRVNS.

The ATP-grasp domain maps to 109–315 (KALMQEAGIP…LEELILACVQ (207 aa)). 135 to 195 (IQAQGAPIVV…EECLTGQEVS (61 aa)) is a binding site for ATP. The Mg(2+) site is built by Glu285 and Asn287.

It belongs to the GARS family. Mg(2+) is required as a cofactor. It depends on Mn(2+) as a cofactor.

The catalysed reaction is 5-phospho-beta-D-ribosylamine + glycine + ATP = N(1)-(5-phospho-beta-D-ribosyl)glycinamide + ADP + phosphate + H(+). Its pathway is purine metabolism; IMP biosynthesis via de novo pathway; N(1)-(5-phospho-D-ribosyl)glycinamide from 5-phospho-alpha-D-ribose 1-diphosphate: step 2/2. The chain is Phosphoribosylamine--glycine ligase from Nostoc sp. (strain PCC 7120 / SAG 25.82 / UTEX 2576).